Consider the following 185-residue polypeptide: Peptide deformylase (185 aa).

Residues Cys109 and His152 each contribute to the Fe cation site. The active site involves Glu153. Residue His156 coordinates Fe cation.

The protein belongs to the polypeptide deformylase family. It depends on Fe(2+) as a cofactor.

The catalysed reaction is N-terminal N-formyl-L-methionyl-[peptide] + H2O = N-terminal L-methionyl-[peptide] + formate. Its function is as follows. Removes the formyl group from the N-terminal Met of newly synthesized proteins. Requires at least a dipeptide for an efficient rate of reaction. N-terminal L-methionine is a prerequisite for activity but the enzyme has broad specificity at other positions. This chain is Peptide deformylase, found in Roseiflexus sp. (strain RS-1).